We begin with the raw amino-acid sequence, 1307 residues long: Rho1 guanine nucleotide exchange factor TUS1 (1307 aa).

Polar residues predominate over residues 1 to 10 (MYRYNRSSPF). Disordered stretches follow at residues 1–144 (MYRY…FIGN), 164–194 (PFAN…SDLR), and 219–239 (EDSE…NVSG). A compositionally biased stretch (basic and acidic residues) spans 12-29 (RTPEKRVSRQESQRKSIE). Polar residues predominate over residues 37-79 (NTRNSFLDDSDNGTDNISIGWTPISDTQQFQSPVPQAFTFTSK). Positions 87-97 (TSSSESTPKST) are enriched in low complexity. The segment covering 176–194 (SPRDSSKQQAHFSDESDLR) has biased composition (basic and acidic residues). One can recognise a DH domain in the interval 467 to 657 (QRQSFIFDLI…EKLNFEVNQV (191 aa)). The 163-residue stretch at 715–877 (KLVLSGTVYK…WIDAIMESFK (163 aa)) folds into the PH domain. The segment at 780 to 802 (TSKQPLRNYSQKEHKSPMHNFST) is disordered. The region spanning 938-1279 (TTRILCCEDV…KLASSERREK (342 aa)) is the CNH domain.

As to quaternary structure, interacts with RHO1.

Its function is as follows. Guanine nucleotide-exchange factor (GEF) for RHO1 that stimulates the exchange of RHO1 GDP-bound form into GTP-bound form. Required for signaling of cell wall defects to RHO1. The polypeptide is Rho1 guanine nucleotide exchange factor TUS1 (TUS1) (Saccharomyces cerevisiae (strain ATCC 204508 / S288c) (Baker's yeast)).